We begin with the raw amino-acid sequence, 135 residues long: MPPNLTGYYRFVSQKNMEDYLQALNISLAVRKIALLLKPDKEIDHQGNHMMVRTLSTFRNYTVQFDVGVEFEEDLRSVDGRKCQTIVTWEEEQLVCVQKGEVPNRGWRHWLEGEMLYLELTARDAVCEQVFRKVR.

Belongs to the calycin superfamily. Fatty-acid binding protein (FABP) family.

Its subcellular location is the cytoplasm. Intracellular transport of retinol. In Pongo abelii (Sumatran orangutan), this protein is Retinol-binding protein 5 (RBP5).